Reading from the N-terminus, the 316-residue chain is Thymidylate synthase (316 aa).

DUMP contacts are provided by residues Arg23 and 178–179; that span reads RR. Cys198 (nucleophile) is an active-site residue. DUMP-binding positions include 218-221, Asn229, and 259-261; these read RSGD and HIY. Asp221 provides a ligand contact to (6R)-5,10-methylene-5,6,7,8-tetrahydrofolate. (6R)-5,10-methylene-5,6,7,8-tetrahydrofolate is bound at residue Ala315.

This sequence belongs to the thymidylate synthase family. Bacterial-type ThyA subfamily. Homodimer.

Its subcellular location is the cytoplasm. The enzyme catalyses dUMP + (6R)-5,10-methylene-5,6,7,8-tetrahydrofolate = 7,8-dihydrofolate + dTMP. The protein operates within pyrimidine metabolism; dTTP biosynthesis. Its function is as follows. Catalyzes the reductive methylation of 2'-deoxyuridine-5'-monophosphate (dUMP) to 2'-deoxythymidine-5'-monophosphate (dTMP) while utilizing 5,10-methylenetetrahydrofolate (mTHF) as the methyl donor and reductant in the reaction, yielding dihydrofolate (DHF) as a by-product. This enzymatic reaction provides an intracellular de novo source of dTMP, an essential precursor for DNA biosynthesis. The sequence is that of Thymidylate synthase from Lactiplantibacillus plantarum (strain ATCC BAA-793 / NCIMB 8826 / WCFS1) (Lactobacillus plantarum).